A 663-amino-acid polypeptide reads, in one-letter code: Ankyrin repeat and SAM domain-containing protein 3 (663 aa).

The interaction with NEK7 stretch occupies residues 1–421 (MSELSDEASE…PGSEPQAEKS (421 aa)). A phosphoserine mark is found at S2 and S5. 6 ANK repeats span residues 34 to 64 (DVPL…DLNK), 68 to 97 (GGWT…SVNV), 101 to 130 (EGQT…ELEM), 134 to 163 (QGWT…NANV), 168 to 197 (YGFT…KVDT), and 201 to 220 (SGAT…IVAL). 3-hydroxyasparagine is present on N96. 5 positions are modified to phosphoserine: S201, S225, S243, S244, and S245. Disordered regions lie at residues 242–261 (LSSS…CRKK) and 278–425 (TGLG…PYSG). T318 carries the phosphothreonine modification. S319 bears the Phosphoserine mark. The segment covering 322–337 (NERDVESSSSSSREEP) has biased composition (basic and acidic residues). Phosphoserine occurs at positions 366, 369, and 373. The span at 378–395 (KSSVRKQTRTYLKNKSRH) shows a compositional bias: basic residues. The region spanning 424 to 487 (SGPQDLATLL…TSAIARWHSS (64 aa)) is the SAM domain. Positions 500–575 (ADRLEAEMQE…AALVLDQLRA (76 aa)) form a coiled coil. S540 carries the phosphoserine modification. Disordered stretches follow at residues 585 to 604 (KQHH…PADS) and 637 to 663 (AEPG…SDVG). The segment covering 641 to 651 (ETTDAEWEEME) has biased composition (acidic residues). A compositionally biased stretch (basic and acidic residues) spans 654-663 (IARRDDSDVG).

Homooligomer. Interacts (via SAM domain) with ANKS6 (via SAM domain). Interacts with BICC1. Interacts with NPHP1. Interacts with NEK8. Interacts with HIF1AN. Interacts with NEK7; this interaction alters the subcellular distribution of NEK7 by preventing its nuclear translocation. In terms of processing, hydroxylated at Asn-96, most probably by HIF1AN. Post-translationally, phosphorylations at Ser-5, Ser-225, Thr-318, Ser-319, Ser-366 and Ser-369 occur in a NEK7-dependent manner. Polyubiquitinated.

The protein resides in the cell projection. Its subcellular location is the cilium. The protein localises to the cytoplasm. May be involved in vasopressin signaling in the kidney. The chain is Ankyrin repeat and SAM domain-containing protein 3 (Anks3) from Rattus norvegicus (Rat).